Reading from the N-terminus, the 193-residue chain is MRLCDRDIEAWLDEGRLSINPRPPVERINGATVDVRLGNKFRTFRGHTAAFIDLSGPKDEVSAALDRVMSDEIVLDEGEAFYLHPGELALAVTLESVTLPADLVGWLDGRSSLARLGLMVHVTAHRIDPGWSGCIVLEFYNSGKLPLALRPGMLIGALSFEPLSGPAVRPYNRREDAKYRNQQGAVASRIDKD.

Residues 110–115 (RSSLAR), Asp128, 136–138 (VLE), Tyr171, Lys178, and Gln182 each bind dCTP. Glu138 functions as the Proton donor/acceptor in the catalytic mechanism.

Belongs to the dCTP deaminase family. As to quaternary structure, homotrimer.

The catalysed reaction is dCTP + H2O + H(+) = dUTP + NH4(+). It participates in pyrimidine metabolism; dUMP biosynthesis; dUMP from dCTP (dUTP route): step 1/2. Catalyzes the deamination of dCTP to dUTP. The chain is dCTP deaminase from Escherichia coli (strain K12 / MC4100 / BW2952).